A 911-amino-acid polypeptide reads, in one-letter code: Protein translocase subunit SecA (911 aa).

ATP-binding positions include Gln-86, 104-108, and Asp-512; that span reads GEGKT. 4 residues coordinate Zn(2+): Cys-895, Cys-897, Cys-906, and His-907.

This sequence belongs to the SecA family. In terms of assembly, monomer and homodimer. Part of the essential Sec protein translocation apparatus which comprises SecA, SecYEG and auxiliary proteins SecDF-YajC and YidC. Zn(2+) serves as cofactor.

The protein resides in the cell inner membrane. The protein localises to the cytoplasm. It carries out the reaction ATP + H2O + cellular proteinSide 1 = ADP + phosphate + cellular proteinSide 2.. In terms of biological role, part of the Sec protein translocase complex. Interacts with the SecYEG preprotein conducting channel. Has a central role in coupling the hydrolysis of ATP to the transfer of proteins into and across the cell membrane, serving both as a receptor for the preprotein-SecB complex and as an ATP-driven molecular motor driving the stepwise translocation of polypeptide chains across the membrane. In Bordetella bronchiseptica (strain ATCC BAA-588 / NCTC 13252 / RB50) (Alcaligenes bronchisepticus), this protein is Protein translocase subunit SecA.